Reading from the N-terminus, the 78-residue chain is Protein SlyX homolog (78 aa).

The protein belongs to the SlyX family.

The protein is Protein SlyX homolog of Xanthomonas campestris pv. campestris (strain 8004).